The sequence spans 231 residues: Putative N-acetylmannosamine-6-phosphate 2-epimerase (231 aa).

This sequence belongs to the NanE family.

It catalyses the reaction an N-acyl-D-glucosamine 6-phosphate = an N-acyl-D-mannosamine 6-phosphate. It functions in the pathway amino-sugar metabolism; N-acetylneuraminate degradation; D-fructose 6-phosphate from N-acetylneuraminate: step 3/5. Its function is as follows. Converts N-acetylmannosamine-6-phosphate (ManNAc-6-P) to N-acetylglucosamine-6-phosphate (GlcNAc-6-P). The sequence is that of Putative N-acetylmannosamine-6-phosphate 2-epimerase from Listeria monocytogenes serotype 4b (strain CLIP80459).